The chain runs to 670 residues: MMPFIEIDHVDRIFPLPDGGRYIALKNIELKISQGEFISLIGHSGCGKSTLLNMISGLDKPTFGGVIMEGKEITEPGPERMVVFQNYSLLPWLTVRQNIALAVNRVLRDLPKPEQEKIIDDNIALVGLQRAAHKRPGELSGGMKQRVAIARALSTRPKVLLLDEPFGALDALTRGNLQERLMEIVQESGVTCIMVTHDVDEALLLSDRVVMLTTGPEAHIGQILEVPIPRPRHRLEVVNHPSYYALRGEMVYFLNQQKRAKKVGAVSQFAEAMGGNGLEKINLDLGFIPLTDCAPLVVAKEKGFFQKHGLEQVNLVKEPSWQAIADGIRERRLDGAQMVAGMPLALTLGMGGKTPLPMVTAMVMSRNGNAITLSKKFAEAGVKTLEDLRLKLAETPDQVSTLGMVHPASMQNLLLRYWLASGSIDPDQDINLMRLPPPQMVSNLEAGNIDGFCVGEPWNSYAVKQNLGYVIATDLDIWNGHPEKVLGMREEWVNKYPATHLALVKALLEACEYCDDRRHRQEILDYLALPQYVGTSTEYISPGFLTEYDQGNDAEAEMLLDFNQFYVKQSNYPSRSEGLWILTQLARWGYIDFPKNWVEIIERVRRPDLFGEACRHLGWPDLEGDHHNVSLFDGMVFTPNDPLGYIKRFTIHRDIQVTEILIDQIDQVNQ.

The 235-residue stretch at 5–239 (IEIDHVDRIF…RPRHRLEVVN (235 aa)) folds into the ABC transporter domain. 42-49 (GHSGCGKS) is an ATP binding site. A linker region spans residues 255–278 (NQQKRAKKVGAVSQFAEAMGGNGL). Residues 279–670 (EKINLDLGFI…LIDQIDQVNQ (392 aa)) form a nrtA-like region.

The protein belongs to the ABC transporter superfamily. Nitrate/nitrite/cyanate uptake transporter (NitT) (TC 3.A.1.16) family. As to quaternary structure, the complex is composed of two ATP-binding proteins (NrtC and NrtD), two transmembrane proteins (NrtB) and a solute-binding protein (NrtA).

It is found in the cell inner membrane. It carries out the reaction nitrate(out) + ATP + H2O = nitrate(in) + ADP + phosphate + H(+). Part of the ABC transporter complex NrtABCD involved in nitrate uptake. The complex is probably also involved in nitrite transport. Probably responsible for energy coupling to the transport system. The sequence is that of Nitrate import ATP-binding protein NrtC (nrtC) from Synechocystis sp. (strain ATCC 27184 / PCC 6803 / Kazusa).